Here is a 494-residue protein sequence, read N- to C-terminus: Protein translocase subunit SecD (494 aa).

The next 6 helical transmembrane spans lie at 7-27, 322-342, 345-365, 372-392, 420-440, and 441-461; these read WFALLIALVISAFLLCINLPF, LIAALLGLSLVAIFMVSFYRL, FIAIFALSFYALFNIAIYALI, PGVAGFVLSIGMAVDANVLIF, IIDGHITTLISCISLFYLGTG, and FVKGFAATLGIGVFISLFTAL.

Belongs to the SecD/SecF family. SecD subfamily. In terms of assembly, forms a complex with SecF. Part of the essential Sec protein translocation apparatus which comprises SecA, SecYEG and auxiliary proteins SecDF. Other proteins may also be involved.

It localises to the cell inner membrane. Its function is as follows. Part of the Sec protein translocase complex. Interacts with the SecYEG preprotein conducting channel. SecDF uses the proton motive force (PMF) to complete protein translocation after the ATP-dependent function of SecA. Probably participates in protein translocation into and across both the cytoplasmic and thylakoid membranes in cyanobacterial cells. This chain is Protein translocase subunit SecD, found in Prochlorococcus marinus (strain SARG / CCMP1375 / SS120).